We begin with the raw amino-acid sequence, 316 residues long: Probable cell division protein WhiA (316 aa).

The segment at residues 280-313 (SLKELGEMLEPPVGKSGVNHRLRKIEKIAEELRT) is a DNA-binding region (H-T-H motif).

Belongs to the WhiA family.

Its function is as follows. Involved in cell division and chromosome segregation. In Clostridium perfringens (strain ATCC 13124 / DSM 756 / JCM 1290 / NCIMB 6125 / NCTC 8237 / Type A), this protein is Probable cell division protein WhiA.